The sequence spans 881 residues: Envelope glycoprotein gp160 (881 aa).

Residues 1–22 (MGCLKNQLLIAILLLSVYGIYC) form the signal peptide. The Extracellular portion of the chain corresponds to 23 to 696 (TQYVTVFYGV…ASWIKYIQYG (674 aa)). N-linked (GlcNAc...) asparagine; by host glycosylation occurs at asparagine 37. A disulfide bridge connects residues cysteine 44 and cysteine 57. N-linked (GlcNAc...) asparagine; by host glycosylation is found at asparagine 70, asparagine 114, asparagine 148, asparagine 158, asparagine 173, asparagine 186, asparagine 200, asparagine 204, asparagine 214, asparagine 246, asparagine 249, asparagine 280, asparagine 286, asparagine 297, asparagine 308, asparagine 318, asparagine 373, and asparagine 379. 5 disulfides stabilise this stretch: cysteine 101/cysteine 222, cysteine 108/cysteine 213, cysteine 113/cysteine 170, cysteine 235/cysteine 265, and cysteine 245/cysteine 257. The interval 113–169 (CNKSETDRWGLTKSSTTITTAAPTSAPVSEKLDMVNETSSCIAQNNCTGLEQEQMIS) is V1. Positions 170–213 (CKFNMTGLKRDKTKEYNETWYSTDLVCEQRNSTDNESRCYMNHC) are V2. Positions 313–345 (CRRPGNKTVLPVTIMSELVFHSQPINDRPKQAW) are V3. Residues cysteine 313 and cysteine 346 are joined by a disulfide bond. Disulfide bonds link cysteine 397–cysteine 461 and cysteine 404–cysteine 434. The tract at residues 404-434 (CKMNWFLNWVEDKDVTTQRPKERHRKNYVPC) is V4. N-linked (GlcNAc...) asparagine; by host glycosylation is found at asparagine 462 and asparagine 478. A V5 region spans residues 477 to 484 (GNQTSITM). Positions 528–548 (GVFVLGFLGFLATAGSAIGAV) are fusion peptide. The tract at residues 591-607 (LQTKVTAIEKYLKDQAQ) is immunosuppression. Residues asparagine 627, asparagine 636, and asparagine 652 are each glycosylated (N-linked (GlcNAc...) asparagine; by host). Positions 636-668 (NDTWQEWERKVDFLEENITALLEEAQIQQEKNM) form a coiled coil. An MPER; binding to GalCer region spans residues 673–694 (KLNSWDVFGNWFDLASWIKYIQ). Residues 697 to 717 (IYVVVGVILLRIVIYIVQMLA) form a helical membrane-spanning segment. Residues 718-881 (KLRQGYRPVF…IRQGLELTLL (164 aa)) are Cytoplasmic-facing. Positions 723–726 (YRPV) match the YXXV motif; contains endocytosis signal motif. The disordered stretch occupies residues 737 to 761 (THTQQDPALPTREGKEGDGGEGGGN). Residue cysteine 789 is the site of S-palmitoyl cysteine; by host attachment. The Di-leucine internalization motif motif lies at 880-881 (LL).

In terms of assembly, the mature envelope protein (Env) consists of a homotrimer of non-covalently associated gp120-gp41 heterodimers. The resulting complex protrudes from the virus surface as a spike. Interacts with host CD4 and CCR5. Gp120 also interacts with the C-type lectins CD209/DC-SIGN and CLEC4M/DC-SIGNR (collectively referred to as DC-SIGN(R)). As to quaternary structure, the mature envelope protein (Env) consists of a homotrimer of non-covalently associated gp120-gp41 heterodimers. The resulting complex protrudes from the virus surface as a spike. Specific enzymatic cleavages in vivo yield mature proteins. Envelope glycoproteins are synthesized as an inactive precursor that is heavily N-glycosylated and processed likely by host cell furin in the Golgi to yield the mature SU and TM proteins. The cleavage site between SU and TM requires the minimal sequence [KR]-X-[KR]-R. In terms of processing, palmitoylation of the transmembrane protein and of Env polyprotein (prior to its proteolytic cleavage) is essential for their association with host cell membrane lipid rafts. Palmitoylation is therefore required for envelope trafficking to classical lipid rafts, but not for viral replication.

The protein resides in the virion membrane. Its subcellular location is the host cell membrane. It localises to the host endosome membrane. The surface protein gp120 (SU) attaches the virus to the host lymphoid cell by binding to the primary receptor CD4. This interaction induces a structural rearrangement creating a high affinity binding site for a chemokine coreceptor like CCR5. This peculiar 2 stage receptor-interaction strategy allows gp120 to maintain the highly conserved coreceptor-binding site in a cryptic conformation, protected from neutralizing antibodies. These changes are transmitted to the transmembrane protein gp41 and are thought to activate its fusogenic potential by unmasking its fusion peptide. Its function is as follows. Surface protein gp120 (SU) may target the virus to gut-associated lymphoid tissue (GALT) by binding host ITGA4/ITGB7 (alpha-4/beta-7 integrins), a complex that mediates T-cell migration to the GALT. Interaction between gp120 and ITGA4/ITGB7 would allow the virus to enter GALT early in the infection, infecting and killing most of GALT's resting CD4+ T-cells. This T-cell depletion is believed to be the major insult to the host immune system leading to AIDS. In terms of biological role, the surface protein gp120 is a ligand for CD209/DC-SIGN and CLEC4M/DC-SIGNR, which are respectively found on dendritic cells (DCs), and on endothelial cells of liver sinusoids and lymph node sinuses. These interactions allow capture of viral particles at mucosal surfaces by these cells and subsequent transmission to permissive cells. DCs are professional antigen presenting cells, critical for host immunity by inducing specific immune responses against a broad variety of pathogens. They act as sentinels in various tissues where they take up antigen, process it, and present it to T-cells following migration to lymphoid organs. SIV subverts the migration properties of dendritic cells to gain access to CD4+ T-cells in lymph nodes. Virus transmission to permissive T-cells occurs either in trans (without DCs infection, through viral capture and transmission), or in cis (following DCs productive infection, through the usual CD4-gp120 interaction), thereby inducing a robust infection. In trans infection, bound virions remain infectious over days and it is proposed that they are not degraded, but protected in non-lysosomal acidic organelles within the DCs close to the cell membrane thus contributing to the viral infectious potential during DCs' migration from the periphery to the lymphoid tissues. On arrival at lymphoid tissues, intact virions recycle back to DCs' cell surface allowing virus transmission to CD4+ T-cells. Virion capture also seems to lead to MHC-II-restricted viral antigen presentation, and probably to the activation of SIV-specific CD4+ cells. Functionally, the transmembrane protein gp41 (TM) acts as a class I viral fusion protein. Under the current model, the protein has at least 3 conformational states: pre-fusion native state, pre-hairpin intermediate state, and post-fusion hairpin state. During fusion of viral and target intracellular membranes, the coiled coil regions (heptad repeats) assume a trimer-of-hairpins structure, positioning the fusion peptide in close proximity to the C-terminal region of the ectodomain. The formation of this structure appears to drive apposition and subsequent fusion of viral and target cell membranes. Complete fusion occurs in host cell endosomes. The virus undergoes clathrin-dependent internalization long before endosomal fusion, thus minimizing the surface exposure of conserved viral epitopes during fusion and reducing the efficacy of inhibitors targeting these epitopes. Membranes fusion leads to delivery of the nucleocapsid into the cytoplasm. The envelope glycoprotein gp160 precursor down-modulates cell surface CD4 antigen by interacting with it in the endoplasmic reticulum and blocking its transport to the cell surface. Its function is as follows. The gp120-gp41 heterodimer allows rapid transcytosis of the virus through CD4 negative cells such as simple epithelial monolayers of the intestinal, rectal and endocervical epithelial barriers. Both gp120 and gp41 specifically recognize glycosphingolipids galactosyl-ceramide (GalCer) or 3' sulfo-galactosyl-ceramide (GalS) present in the lipid rafts structures of epithelial cells. Binding to these alternative receptors allows the rapid transcytosis of the virus through the epithelial cells. This transcytotic vesicle-mediated transport of virions from the apical side to the basolateral side of the epithelial cells does not involve infection of the cells themselves. The sequence is that of Envelope glycoprotein gp160 (env) from Simian immunodeficiency virus (isolate K78) (SIV-mac).